A 399-amino-acid polypeptide reads, in one-letter code: Phosphopentomutase (399 aa).

Mn(2+)-binding residues include aspartate 10, aspartate 296, histidine 301, aspartate 337, histidine 338, and histidine 349.

The protein belongs to the phosphopentomutase family. Mn(2+) serves as cofactor.

The protein resides in the cytoplasm. The enzyme catalyses 2-deoxy-alpha-D-ribose 1-phosphate = 2-deoxy-D-ribose 5-phosphate. It catalyses the reaction alpha-D-ribose 1-phosphate = D-ribose 5-phosphate. It functions in the pathway carbohydrate degradation; 2-deoxy-D-ribose 1-phosphate degradation; D-glyceraldehyde 3-phosphate and acetaldehyde from 2-deoxy-alpha-D-ribose 1-phosphate: step 1/2. Functionally, isomerase that catalyzes the conversion of deoxy-ribose 1-phosphate (dRib-1-P) and ribose 1-phosphate (Rib-1-P) to deoxy-ribose 5-phosphate (dRib-5-P) and ribose 5-phosphate (Rib-5-P), respectively. This is Phosphopentomutase from Idiomarina loihiensis (strain ATCC BAA-735 / DSM 15497 / L2-TR).